The sequence spans 465 residues: MHEILTVTFGRKSNFCWTHFWNTQESYFVYDPNDHAKVNVNTNFRVLKKRDPEAIVTVPRECIYDTPIEFGNTRKNWLEELNESSGGKGTAWDGKLTQIMQTPVDVHPYQEALWSRDEIHEGNAIESEYELPSIRPKSVKYWSDFNRLFLDTEYLFPVNCSELNSSDFSFQLGVERFHDFDKQFNVWDEGLRPLVEECDSVQGFQAAIDIDTPWGGFASEYMKVVQDELGECRVPTWVYGIREPIQSDSSATIDNHFGKLNEALSLSQLNGSCSQYFPLCTISQGDDLWASSAKINLAIESFTLPTRVYGSSCYRMKDIESKLQSEGRGFIHNLNFKAKNYSSKEWALVSSASFVNVAQDYSQQNNCLFGVVRSPKDNQGLLEGKNYNASSISKIVNIQNLGLPSLETVPEGLRTLDTVFVEATNDGQINSHIQGLTKSLNRRFVSFVDQDELEEIREILSSYII.

Position 446 is a phosphoserine (serine 446).

It belongs to the misato family.

It localises to the mitochondrion. Involved in the partitioning of the mitochondrial organelle and mitochondrial DNA (mtDNA) inheritance. The chain is Protein dml1 (dml1) from Schizosaccharomyces pombe (strain 972 / ATCC 24843) (Fission yeast).